The primary structure comprises 221 residues: Deoxyribose-phosphate aldolase (221 aa).

Asp90 serves as the catalytic Proton donor/acceptor. Residue Lys152 is the Schiff-base intermediate with acetaldehyde of the active site. Lys181 functions as the Proton donor/acceptor in the catalytic mechanism.

The protein belongs to the DeoC/FbaB aldolase family. DeoC type 1 subfamily.

The protein localises to the cytoplasm. It catalyses the reaction 2-deoxy-D-ribose 5-phosphate = D-glyceraldehyde 3-phosphate + acetaldehyde. It participates in carbohydrate degradation; 2-deoxy-D-ribose 1-phosphate degradation; D-glyceraldehyde 3-phosphate and acetaldehyde from 2-deoxy-alpha-D-ribose 1-phosphate: step 2/2. Functionally, catalyzes a reversible aldol reaction between acetaldehyde and D-glyceraldehyde 3-phosphate to generate 2-deoxy-D-ribose 5-phosphate. This Exiguobacterium sp. (strain ATCC BAA-1283 / AT1b) protein is Deoxyribose-phosphate aldolase.